The chain runs to 519 residues: DDB1- and CUL4-associated factor 17 (519 aa).

Transmembrane regions (helical) follow at residues 186 to 206 (VLLY…ILEI) and 222 to 242 (GILI…QAII).

As to quaternary structure, interacts with DDB1, CUL4A and CUL4B. In terms of tissue distribution, ubiquitously expressed in the embryo, with higher expression in brain, liver and skin tissues.

The protein localises to the membrane. The protein resides in the nucleus. Its subcellular location is the nucleolus. Its pathway is protein modification; protein ubiquitination. Its function is as follows. May function as a substrate receptor for CUL4-DDB1 E3 ubiquitin-protein ligase complex. This is DDB1- and CUL4-associated factor 17 (Dcaf17) from Mus musculus (Mouse).